Consider the following 309-residue polypeptide: Probable manganese-dependent inorganic pyrophosphatase (309 aa).

Mn(2+) contacts are provided by histidine 9, aspartate 13, aspartate 15, aspartate 75, histidine 97, and aspartate 149.

This sequence belongs to the PPase class C family. Mn(2+) is required as a cofactor.

It is found in the cytoplasm. It carries out the reaction diphosphate + H2O = 2 phosphate + H(+). In Staphylococcus haemolyticus (strain JCSC1435), this protein is Probable manganese-dependent inorganic pyrophosphatase.